Here is a 164-residue protein sequence, read N- to C-terminus: V-type proton ATPase subunit c' (164 aa).

The Vacuolar segment spans residues Met-1 to Tyr-14. Residues Ala-15–Gly-37 form a helical membrane-spanning segment. The Cytoplasmic segment spans residues Thr-38–Ser-59. The chain crosses the membrane as a helical span at residues Leu-60–Ile-80. Residues Ala-81–His-98 are Vacuolar-facing. The chain crosses the membrane as a helical span at residues Leu-99–Gly-120. Residues Asp-121 to Arg-132 lie on the Cytoplasmic side of the membrane. Residues Leu-133–Leu-158 form a helical membrane-spanning segment. The Vacuolar segment spans residues Asn-159 to Glu-164.

The protein belongs to the V-ATPase proteolipid subunit family. V-ATPase is a heteromultimeric enzyme composed of a peripheral catalytic V1 complex (components A to H) attached to an integral membrane V0 proton pore complex (components: a, c, c', c'', d, e, f and VOA1). The decameric c-ring forms the proton-conducting pore, and is composed of eight proteolipid subunits c, one subunit c' and one subunit c''.

The protein localises to the vacuole membrane. Its function is as follows. Proton-conducting pore forming subunit of the V0 complex of vacuolar(H+)-ATPase (V-ATPase), a multisubunit enzyme composed of a peripheral complex (V1) that hydrolyzes ATP and a membrane integral complex (V0) that translocates protons. V-ATPase is responsible for acidifying and maintaining the pH of intracellular compartments. The polypeptide is V-type proton ATPase subunit c' (VMA11) (Saccharomyces cerevisiae (strain ATCC 204508 / S288c) (Baker's yeast)).